Reading from the N-terminus, the 158-residue chain is SsrA-binding protein (158 aa).

A compositionally biased stretch (basic and acidic residues) spans 133–152 (KRQTLREQQDNREAQREMRE). The tract at residues 133 to 158 (KRQTLREQQDNREAQREMRERNRRRG) is disordered.

This sequence belongs to the SmpB family.

It localises to the cytoplasm. Functionally, required for rescue of stalled ribosomes mediated by trans-translation. Binds to transfer-messenger RNA (tmRNA), required for stable association of tmRNA with ribosomes. tmRNA and SmpB together mimic tRNA shape, replacing the anticodon stem-loop with SmpB. tmRNA is encoded by the ssrA gene; the 2 termini fold to resemble tRNA(Ala) and it encodes a 'tag peptide', a short internal open reading frame. During trans-translation Ala-aminoacylated tmRNA acts like a tRNA, entering the A-site of stalled ribosomes, displacing the stalled mRNA. The ribosome then switches to translate the ORF on the tmRNA; the nascent peptide is terminated with the 'tag peptide' encoded by the tmRNA and targeted for degradation. The ribosome is freed to recommence translation, which seems to be the essential function of trans-translation. This chain is SsrA-binding protein, found in Pseudarthrobacter chlorophenolicus (strain ATCC 700700 / DSM 12829 / CIP 107037 / JCM 12360 / KCTC 9906 / NCIMB 13794 / A6) (Arthrobacter chlorophenolicus).